Reading from the N-terminus, the 742-residue chain is mRNA export factor ICP27 homolog (742 aa).

Basic and acidic residues predominate over residues 1 to 11 (MELHSRGRHDA). Residues 1–202 (MELHSRGRHD…NHHGSSAGPQ (202 aa)) form a disordered region. The span at 72–85 (SHHHRPCVPARRPR) shows a compositional bias: basic residues. Basic and acidic residues predominate over residues 153 to 171 (KSYDNDDGEPHHHGGDSTH). Residues 179-202 (CPTTFGSSHPSSANNHHGSSAGPQ) are compositionally biased toward polar residues. Zn(2+) contacts are provided by C387, H494, C496, and C501. The CHC2-type zinc-finger motif lies at 387–501 (CILDHQDGWG…QCHECQNEMC (115 aa)). The segment at 540-742 (ASNHATAGGQ…MLCYSDDMDD (203 aa)) is disordered. A compositionally biased stretch (basic and acidic residues) spans 578-587 (YDKKDREGSH). Residues 614–626 (GELEEDEDSDDAS) show a composition bias toward acidic residues. Over residues 692–703 (QSANGNHSTTAT) the composition is skewed to polar residues.

It belongs to the HHV-1 ICP27 protein family. As to quaternary structure, self-associates and forms high-molecular-mass complexes. Interacts with host DDX39A and DDX39B; these interactions are required for UL69 function in mRNA export. Interacts with host SUPT6H, EIF4A1 and PABPC1. Phosphorylated by UL97 and host CDK1, CDK7 and CD9. Phosphorylation by CDKs impacts on UL69 nuclear localization and activity.

It is found in the virion tegument. The protein localises to the virion. Its subcellular location is the host nucleus. It localises to the host cytoplasm. Immediate early (EI) protein that plays many roles during productive infection including regulation of host cell cycle progression, regulation of viral gene expression or nuclear export of intronless viral RNAs. Acts as a transcriptional transactivator via interaction with the cellular transcription elongation factor SUPT6H and as a nuclear RNA export factor via interaction with UAP56, a component of the cellular mRNA export machinery. The sequence is that of mRNA export factor ICP27 homolog from Human cytomegalovirus (strain Merlin) (HHV-5).